Reading from the N-terminus, the 456-residue chain is Exodeoxyribonuclease 7 large subunit (456 aa).

It belongs to the XseA family. In terms of assembly, heterooligomer composed of large and small subunits.

The protein resides in the cytoplasm. The catalysed reaction is Exonucleolytic cleavage in either 5'- to 3'- or 3'- to 5'-direction to yield nucleoside 5'-phosphates.. Its function is as follows. Bidirectionally degrades single-stranded DNA into large acid-insoluble oligonucleotides, which are then degraded further into small acid-soluble oligonucleotides. The polypeptide is Exodeoxyribonuclease 7 large subunit (Lactobacillus delbrueckii subsp. bulgaricus (strain ATCC BAA-365 / Lb-18)).